The following is a 215-amino-acid chain: 3-isopropylmalate dehydratase small subunit (215 aa).

This sequence belongs to the LeuD family. LeuD type 1 subfamily. Heterodimer of LeuC and LeuD.

The enzyme catalyses (2R,3S)-3-isopropylmalate = (2S)-2-isopropylmalate. It functions in the pathway amino-acid biosynthesis; L-leucine biosynthesis; L-leucine from 3-methyl-2-oxobutanoate: step 2/4. Functionally, catalyzes the isomerization between 2-isopropylmalate and 3-isopropylmalate, via the formation of 2-isopropylmaleate. This chain is 3-isopropylmalate dehydratase small subunit, found in Marinobacter nauticus (strain ATCC 700491 / DSM 11845 / VT8) (Marinobacter aquaeolei).